The primary structure comprises 161 residues: Phosphopantetheine adenylyltransferase (161 aa).

Thr10 provides a ligand contact to substrate. Residues 10–11 and His18 each bind ATP; that span reads TF. The substrate site is built by Lys42, Met74, and Arg88. ATP-binding positions include 89 to 91, Glu99, and 124 to 130; these read GLR and WSFISSS.

Belongs to the bacterial CoaD family. In terms of assembly, homohexamer. The cofactor is Mg(2+).

It localises to the cytoplasm. It catalyses the reaction (R)-4'-phosphopantetheine + ATP + H(+) = 3'-dephospho-CoA + diphosphate. Its pathway is cofactor biosynthesis; coenzyme A biosynthesis; CoA from (R)-pantothenate: step 4/5. In terms of biological role, reversibly transfers an adenylyl group from ATP to 4'-phosphopantetheine, yielding dephospho-CoA (dPCoA) and pyrophosphate. The polypeptide is Phosphopantetheine adenylyltransferase (Serratia marcescens).